We begin with the raw amino-acid sequence, 372 residues long: Glutamate 5-kinase (372 aa).

Lysine 14 contacts ATP. Residues serine 54, aspartate 141, and asparagine 153 each contribute to the substrate site. ATP contacts are provided by residues 173-174 and 215-221; these read TD and TGGMATK. In terms of domain architecture, PUA spans 280–358; that stretch reads RGKLILDQGA…DDIESLLGYD (79 aa).

It belongs to the glutamate 5-kinase family.

The protein localises to the cytoplasm. It carries out the reaction L-glutamate + ATP = L-glutamyl 5-phosphate + ADP. It participates in amino-acid biosynthesis; L-proline biosynthesis; L-glutamate 5-semialdehyde from L-glutamate: step 1/2. Functionally, catalyzes the transfer of a phosphate group to glutamate to form L-glutamate 5-phosphate. The chain is Glutamate 5-kinase from Shewanella sediminis (strain HAW-EB3).